We begin with the raw amino-acid sequence, 588 residues long: Aspartate--tRNA ligase (588 aa).

Glu-171 provides a ligand contact to L-aspartate. The aspartate stretch occupies residues 195–198 (QLFK). Arg-217 is a binding site for L-aspartate. Residues 217-219 (RDE) and Gln-226 contribute to the ATP site. His-447 is an L-aspartate binding site. Glu-481 serves as a coordination point for ATP. L-aspartate is bound at residue Arg-488. Position 533 to 536 (533 to 536 (GLDR)) interacts with ATP.

The protein belongs to the class-II aminoacyl-tRNA synthetase family. Type 1 subfamily. Homodimer.

The protein localises to the cytoplasm. It carries out the reaction tRNA(Asp) + L-aspartate + ATP = L-aspartyl-tRNA(Asp) + AMP + diphosphate. Catalyzes the attachment of L-aspartate to tRNA(Asp) in a two-step reaction: L-aspartate is first activated by ATP to form Asp-AMP and then transferred to the acceptor end of tRNA(Asp). The sequence is that of Aspartate--tRNA ligase from Aeromonas salmonicida (strain A449).